The primary structure comprises 49 residues: Large ribosomal subunit protein bL33A (49 aa).

The protein belongs to the bacterial ribosomal protein bL33 family.

The protein is Large ribosomal subunit protein bL33A of Staphylococcus aureus (strain Mu3 / ATCC 700698).